The sequence spans 488 residues: Protein nucleotidyltransferase YdiU (488 aa).

Residues G91, G93, R94, K114, D126, G127, R177, and R184 each contribute to the ATP site. The active-site Proton acceptor is D253. N254 and D263 together coordinate Mg(2+). D263 contacts ATP.

It belongs to the SELO family. It depends on Mg(2+) as a cofactor. The cofactor is Mn(2+).

The enzyme catalyses L-seryl-[protein] + ATP = 3-O-(5'-adenylyl)-L-seryl-[protein] + diphosphate. It carries out the reaction L-threonyl-[protein] + ATP = 3-O-(5'-adenylyl)-L-threonyl-[protein] + diphosphate. The catalysed reaction is L-tyrosyl-[protein] + ATP = O-(5'-adenylyl)-L-tyrosyl-[protein] + diphosphate. It catalyses the reaction L-histidyl-[protein] + UTP = N(tele)-(5'-uridylyl)-L-histidyl-[protein] + diphosphate. The enzyme catalyses L-seryl-[protein] + UTP = O-(5'-uridylyl)-L-seryl-[protein] + diphosphate. It carries out the reaction L-tyrosyl-[protein] + UTP = O-(5'-uridylyl)-L-tyrosyl-[protein] + diphosphate. Nucleotidyltransferase involved in the post-translational modification of proteins. It can catalyze the addition of adenosine monophosphate (AMP) or uridine monophosphate (UMP) to a protein, resulting in modifications known as AMPylation and UMPylation. The chain is Protein nucleotidyltransferase YdiU from Bacillus cereus (strain AH187).